A 122-amino-acid chain; its full sequence is Large ribosomal subunit protein uL14 (122 aa).

This sequence belongs to the universal ribosomal protein uL14 family. Part of the 50S ribosomal subunit. Forms a cluster with proteins L3 and L19. In the 70S ribosome, L14 and L19 interact and together make contacts with the 16S rRNA in bridges B5 and B8.

Binds to 23S rRNA. Forms part of two intersubunit bridges in the 70S ribosome. The chain is Large ribosomal subunit protein uL14 from Alkaliphilus oremlandii (strain OhILAs) (Clostridium oremlandii (strain OhILAs)).